Reading from the N-terminus, the 247-residue chain is 3-deoxy-manno-octulosonate cytidylyltransferase (247 aa).

Belongs to the KdsB family.

It localises to the cytoplasm. The catalysed reaction is 3-deoxy-alpha-D-manno-oct-2-ulosonate + CTP = CMP-3-deoxy-beta-D-manno-octulosonate + diphosphate. Its pathway is nucleotide-sugar biosynthesis; CMP-3-deoxy-D-manno-octulosonate biosynthesis; CMP-3-deoxy-D-manno-octulosonate from 3-deoxy-D-manno-octulosonate and CTP: step 1/1. The protein operates within bacterial outer membrane biogenesis; lipopolysaccharide biosynthesis. Functionally, activates KDO (a required 8-carbon sugar) for incorporation into bacterial lipopolysaccharide in Gram-negative bacteria. The sequence is that of 3-deoxy-manno-octulosonate cytidylyltransferase from Chlorobium limicola (strain DSM 245 / NBRC 103803 / 6330).